Here is a 303-residue protein sequence, read N- to C-terminus: Quinolinate synthase (303 aa).

Iminosuccinate is bound by residues histidine 25 and serine 42. Cysteine 87 is a [4Fe-4S] cluster binding site. Iminosuccinate-binding positions include 113-115 (YVN) and serine 130. Residue cysteine 173 participates in [4Fe-4S] cluster binding. Iminosuccinate contacts are provided by residues 199–201 (HPE) and threonine 216. [4Fe-4S] cluster is bound at residue cysteine 261.

It belongs to the quinolinate synthase family. Type 2 subfamily. Requires [4Fe-4S] cluster as cofactor.

The protein resides in the cytoplasm. It carries out the reaction iminosuccinate + dihydroxyacetone phosphate = quinolinate + phosphate + 2 H2O + H(+). It participates in cofactor biosynthesis; NAD(+) biosynthesis; quinolinate from iminoaspartate: step 1/1. In terms of biological role, catalyzes the condensation of iminoaspartate with dihydroxyacetone phosphate to form quinolinate. The sequence is that of Quinolinate synthase from Desulforudis audaxviator (strain MP104C).